A 566-amino-acid polypeptide reads, in one-letter code: Oxygen-dependent choline dehydrogenase (566 aa).

7–36 provides a ligand contact to FAD; the sequence is DYIICGAGSAGNVLATRLTEDPNVTVLLLE. Positions 182-204 are disordered; the sequence is YQQEGFGPMDRTVTPKGRRASTA. Histidine 474 acts as the Proton acceptor in catalysis.

It belongs to the GMC oxidoreductase family. FAD is required as a cofactor.

The catalysed reaction is choline + A = betaine aldehyde + AH2. It carries out the reaction betaine aldehyde + NAD(+) + H2O = glycine betaine + NADH + 2 H(+). The protein operates within amine and polyamine biosynthesis; betaine biosynthesis via choline pathway; betaine aldehyde from choline (cytochrome c reductase route): step 1/1. Functionally, involved in the biosynthesis of the osmoprotectant glycine betaine. Catalyzes the oxidation of choline to betaine aldehyde and betaine aldehyde to glycine betaine at the same rate. This chain is Oxygen-dependent choline dehydrogenase, found in Burkholderia multivorans (strain ATCC 17616 / 249).